We begin with the raw amino-acid sequence, 196 residues long: Adenine phosphoribosyltransferase (196 aa).

It belongs to the purine/pyrimidine phosphoribosyltransferase family. As to quaternary structure, homodimer.

It localises to the cytoplasm. It catalyses the reaction AMP + diphosphate = 5-phospho-alpha-D-ribose 1-diphosphate + adenine. It participates in purine metabolism; AMP biosynthesis via salvage pathway; AMP from adenine: step 1/1. Catalyzes a salvage reaction resulting in the formation of AMP, that is energically less costly than de novo synthesis. In Methylibium petroleiphilum (strain ATCC BAA-1232 / LMG 22953 / PM1), this protein is Adenine phosphoribosyltransferase.